A 4690-amino-acid polypeptide reads, in one-letter code: Nonribosomal peptide synthetase sidN (4690 aa).

An adenylation 1 region spans residues 238–656; that stretch reads ARVRENPGRI…LGRLSSDQIK (419 aa). Residues 779–856 enclose the Carrier 1 domain; that stretch reads SSSIPMLQSV…DLDTKAQQAL (78 aa). S816 is subject to O-(pantetheine 4'-phosphoryl)serine. The tract at residues 924–1175 is condensation 1; that stretch reads APGGKAFIQH…AFGNTMSDRF (252 aa). An adenylation 2 region spans residues 1349 to 1760; sequence EFAQKSPNAI…GRKDDLVKIR (412 aa). In terms of domain architecture, Carrier 2 spans 1889–1965; it reads PAWCIKHRPL…DLINHLSVKR (77 aa). Position 1926 is an O-(pantetheine 4'-phosphoryl)serine (S1926). Residues 2001–2285 are condensation 2; it reads PTTVFQDGML…SERLLESQLV (285 aa). The tract at residues 2464-2869 is adenylation 3; that stretch reads TWAKTHPEWK…GRKDEQVKVR (406 aa). One can recognise a Carrier 3 domain in the interval 3002 to 3079; it reads RDLTSIEKQI…ELGRMKNALK (78 aa). S3040 is modified (O-(pantetheine 4'-phosphoryl)serine). A condensation 3 region spans residues 3121 to 3530; that stretch reads CMPLQEVLVA…QMESLVTSFT (410 aa). Positions 3564–3637 constitute a Carrier 4 domain; it reads SVLEQQIRDV…KLATHIQTTS (74 aa). O-(pantetheine 4'-phosphoryl)serine is present on S3598. Residues 3679-4087 are condensation 4; it reads VYPLTPLQAG…FESIRKHPDE (409 aa). The Carrier 5 domain occupies 4119 to 4195; it reads SAIDQFLDPL…KLCEVAFAKS (77 aa). An O-(pantetheine 4'-phosphoryl)serine modification is found at S4156. Residues 4262–4589 form a condensation 5 region; that stretch reads WVFKAENGLD…FNAHLNILWN (328 aa).

It belongs to the NRP synthetase family.

It participates in siderophore biosynthesis. Functionally, nonribosomal peptide synthetase required for the biosynthetis of epichloenin A, an extracellular siderophore that plays a crucial role in endophyte-grass symbioses. SidN assembles epichloenin A by activating and incorporating three trans-anhydromevalonylhydroxyornithine (trans-AMHO), 1 glutamine and 4 glycine moieties. Trans-AMHO is produced from L-ornithine via 2 steps involving a L-ornithine N(5)-monooxygenase and an AHMO-N(5)-transacylase that have still to be identified. The third adenylation domain (A3) of sidN incorporates the hydroxamate groups of the siderophore which forms an octahedral iron complex. The other component amino acids are assembled by sidN adenylation domains A1 and A2. This chain is Nonribosomal peptide synthetase sidN, found in Epichloe festucae (strain Fl1).